Reading from the N-terminus, the 227-residue chain is Urease accessory protein UreF (227 aa).

This sequence belongs to the UreF family. In terms of assembly, ureD, UreF and UreG form a complex that acts as a GTP-hydrolysis-dependent molecular chaperone, activating the urease apoprotein by helping to assemble the nickel containing metallocenter of UreC. The UreE protein probably delivers the nickel.

The protein localises to the cytoplasm. Required for maturation of urease via the functional incorporation of the urease nickel metallocenter. The sequence is that of Urease accessory protein UreF from Blochmanniella floridana.